Reading from the N-terminus, the 351-residue chain is Protein-glutamate methylesterase/protein-glutamine glutaminase (351 aa).

A Response regulatory domain is found at 8-125; the sequence is TVVVVDDSLT…GEDPFAGLGD (118 aa). 4-aspartylphosphate is present on D59. The 195-residue stretch at 151–345 folds into the CheB-type methylesterase domain; it reads PKIGTVVGIG…PAILNLCERR (195 aa). Active-site residues include S162, H188, and D287.

This sequence belongs to the CheB family. In terms of processing, phosphorylated by CheA. Phosphorylation of the N-terminal regulatory domain activates the methylesterase activity.

Its subcellular location is the cytoplasm. The enzyme catalyses [protein]-L-glutamate 5-O-methyl ester + H2O = L-glutamyl-[protein] + methanol + H(+). It carries out the reaction L-glutaminyl-[protein] + H2O = L-glutamyl-[protein] + NH4(+). Its function is as follows. Involved in chemotaxis. Part of a chemotaxis signal transduction system that modulates chemotaxis in response to various stimuli. Catalyzes the demethylation of specific methylglutamate residues introduced into the chemoreceptors (methyl-accepting chemotaxis proteins or MCP) by CheR. Also mediates the irreversible deamidation of specific glutamine residues to glutamic acid. The chain is Protein-glutamate methylesterase/protein-glutamine glutaminase from Gluconobacter oxydans (strain 621H) (Gluconobacter suboxydans).